The primary structure comprises 346 residues: Uroporphyrinogen decarboxylase (346 aa).

Substrate contacts are provided by residues 21–25 (RQAGR), aspartate 71, tyrosine 146, serine 201, and histidine 316.

Belongs to the uroporphyrinogen decarboxylase family. In terms of assembly, homodimer.

It localises to the cytoplasm. The catalysed reaction is uroporphyrinogen III + 4 H(+) = coproporphyrinogen III + 4 CO2. It functions in the pathway porphyrin-containing compound metabolism; protoporphyrin-IX biosynthesis; coproporphyrinogen-III from 5-aminolevulinate: step 4/4. Functionally, catalyzes the decarboxylation of four acetate groups of uroporphyrinogen-III to yield coproporphyrinogen-III. In Rickettsia rickettsii (strain Iowa), this protein is Uroporphyrinogen decarboxylase.